Reading from the N-terminus, the 367-residue chain is 3-dehydroquinate synthase (367 aa).

NAD(+) contacts are provided by residues 72–77, 106–110, 130–131, K143, K152, and 170–173; these read DGENYK, GVIGD, TT, and FLST. Positions 185, 248, and 265 each coordinate Zn(2+).

Belongs to the sugar phosphate cyclases superfamily. Dehydroquinate synthase family. It depends on Co(2+) as a cofactor. Zn(2+) is required as a cofactor. NAD(+) serves as cofactor.

The protein localises to the cytoplasm. The enzyme catalyses 7-phospho-2-dehydro-3-deoxy-D-arabino-heptonate = 3-dehydroquinate + phosphate. It participates in metabolic intermediate biosynthesis; chorismate biosynthesis; chorismate from D-erythrose 4-phosphate and phosphoenolpyruvate: step 2/7. Its function is as follows. Catalyzes the conversion of 3-deoxy-D-arabino-heptulosonate 7-phosphate (DAHP) to dehydroquinate (DHQ). The sequence is that of 3-dehydroquinate synthase from Buchnera aphidicola subsp. Cinara cedri (strain Cc).